A 365-amino-acid chain; its full sequence is tRNA(Met) cytidine acetate ligase (365 aa).

ATP contacts are provided by residues 7-20, Gly96, Asn152, and Arg175; that span reads IAEF…HKYL.

It belongs to the TmcAL family.

Its subcellular location is the cytoplasm. It catalyses the reaction cytidine(34) in elongator tRNA(Met) + acetate + ATP = N(4)-acetylcytidine(34) in elongator tRNA(Met) + AMP + diphosphate. Its function is as follows. Catalyzes the formation of N(4)-acetylcytidine (ac(4)C) at the wobble position of elongator tRNA(Met), using acetate and ATP as substrates. First activates an acetate ion to form acetyladenylate (Ac-AMP) and then transfers the acetyl group to tRNA to form ac(4)C34. This Streptococcus pneumoniae (strain JJA) protein is tRNA(Met) cytidine acetate ligase.